The chain runs to 271 residues: 3'-phosphoadenosine 5'-phosphate phosphatase (271 aa).

The Mg(2+) site is built by E73, D91, L93, D94, and D216. E73 serves as a coordination point for substrate. Substrate contacts are provided by residues 93 to 96 (LDGT) and D216.

It belongs to the inositol monophosphatase superfamily. In terms of assembly, homodimer. Requires Mg(2+) as cofactor.

It carries out the reaction adenosine 3',5'-bisphosphate + H2O = AMP + phosphate. The enzyme catalyses beta-D-fructose 1,6-bisphosphate + H2O = beta-D-fructose 6-phosphate + phosphate. It catalyses the reaction a myo-inositol phosphate + H2O = myo-inositol + phosphate. The protein operates within sulfur metabolism; sulfate assimilation. Phosphatase with a broad specificity. Its primary physiological function is to dephosphorylate 3'-phosphoadenosine 5'-phosphate (PAP) and 3'-phosphoadenosine 5'-phosphosulfate (PAPS). Thus, plays a role in mycobacterial sulfur metabolism, since it can serve as a key regulator of the sulfate assimilation pathway by controlling the pools of PAP and PAPS in the cell. To a lesser extent, is also able to hydrolyze inositol 1-phosphate (I-1-P), fructose 1,6-bisphosphate (FBP) (to fructose 6-phosphate (F-6-P)) and AMP in vitro, but this might not be significant in vivo. This chain is 3'-phosphoadenosine 5'-phosphate phosphatase (cysQ), found in Mycobacterium leprae (strain TN).